A 587-amino-acid polypeptide reads, in one-letter code: Aspartate--tRNA ligase (587 aa).

Residue Glu174 coordinates L-aspartate. Residues 198–201 are aspartate; the sequence is QITK. Arg220 contributes to the L-aspartate binding site. Residues 220 to 222 and Gln229 each bind ATP; that span reads RDE. His443 contacts L-aspartate. Glu477 contributes to the ATP binding site. Arg484 is a binding site for L-aspartate. Position 529-532 (529-532) interacts with ATP; the sequence is GLDR.

It belongs to the class-II aminoacyl-tRNA synthetase family. Type 1 subfamily. Homodimer.

The protein localises to the cytoplasm. It carries out the reaction tRNA(Asp) + L-aspartate + ATP = L-aspartyl-tRNA(Asp) + AMP + diphosphate. In terms of biological role, catalyzes the attachment of L-aspartate to tRNA(Asp) in a two-step reaction: L-aspartate is first activated by ATP to form Asp-AMP and then transferred to the acceptor end of tRNA(Asp). This Streptococcus pneumoniae serotype 19F (strain G54) protein is Aspartate--tRNA ligase.